The primary structure comprises 186 residues: Methyl-CpG-binding domain protein 3-like 1 (186 aa).

A transcription repressor region spans residues 1-104; it reads MGKTSQRKQC…TSTDTVASAS (104 aa).

This sequence belongs to the MBD3L family. Highly expressed in testis. Not detected in the other tissues tested.

The protein resides in the nucleus. Its function is as follows. Transcriptional repressor. The protein is Methyl-CpG-binding domain protein 3-like 1 (Mbd3l1) of Mus musculus (Mouse).